The sequence spans 1063 residues: Structural polyprotein (1063 aa).

Residues M1–A131 form a disordered region. Residues G30–G69 form a human C1QBP/SF2P32-binding region. S46 is subject to Phosphoserine; by host. Over residues P59–G69 the composition is skewed to basic residues. Residues Q70 to T87 show a composition bias toward basic and acidic residues. The span at A93–P107 shows a compositional bias: pro residues. C153 and C197 are disulfide-bonded. Residues G279–A300 are functions as E2 signal peptide. The Extracellular segment spans residues G301 to S534. N353, N371, N410, and N429 each carry an N-linked (GlcNAc...) asparagine; by host glycan. Residues L535–C555 traverse the membrane as a helical segment. The Cytoplasmic portion of the chain corresponds to R556–G582. Residues G563–G582 form a functions as E1 signal peptide region. The Extracellular portion of the chain corresponds to E583–H1028. 8 disulfide bridges follow: C590-C595, C619-C824, C641-C653, C699-C712, C758-C767, C807-C817, C931-C934, and C950-C983. The N-linked (GlcNAc...) asparagine; by host glycan is linked to N658. Ca(2+) is bound by residues N670 and A671. Ca(2+) contacts are provided by D718 and T719. 2 N-linked (GlcNAc...) asparagine; by host glycosylation sites follow: N759 and N791. 2 O-linked (GalNAc...) threonine; by host glycosylation sites follow: T1011 and T1012. Residues W1029–C1049 traverse the membrane as a helical segment. Residues A1050–R1063 are Extracellular-facing.

As to quaternary structure, homodimer; further assembles into homooligomer. Interacts with human C1QBP. Interacts (via N-terminus) with protease/methyltransferase p150. In terms of assembly, heterodimer with spike glycoprotein E2. Heterodimer with spike glycoprotein E1. In terms of processing, structural polyprotein: Specific enzymatic cleavages in vivo yield mature proteins. Two signal peptidase-mediated cleavages within the polyprotein produce the structural proteins capsid, E2, and E1. The E2 signal peptide remains attached to the C-terminus of the capsid protein after cleavage by the signal peptidase. Another signal peptide at E2 C-terminus directs E1 to the ER, with a similar mechanism. Post-translationally, contains three N-linked oligosaccharides. Capsid is phosphorylated on Ser-46 by host. This phosphorylation negatively regulates capsid protein RNA-binding activity. Dephosphorylated by human PP1A.

The protein resides in the virion. It localises to the host cytoplasm. Its subcellular location is the host mitochondrion. It is found in the virion membrane. The protein localises to the host Golgi apparatus membrane. In terms of biological role, capsid protein interacts with genomic RNA and assembles into icosahedric core particles 65-70 nm in diameter. The resulting nucleocapsid eventually associates with the cytoplasmic domain of E2 at the cell membrane, leading to budding and formation of mature virions from host Golgi membranes. Phosphorylation negatively regulates RNA-binding activity, possibly delaying virion assembly during the viral replication phase. Capsid protein dimerizes and becomes disulfide-linked in the virion. Modulates genomic RNA replication. Modulates subgenomic RNA synthesis by interacting with human C1QBP/SF2P32. Induces both perinuclear clustering of mitochondria and the formation of electron-dense intermitochondrial plaques, both hallmarks of rubella virus infected cells. Induces apoptosis when expressed in transfected cells. Its function is as follows. Responsible for viral attachment to target host cell, by binding to the cell receptor. Its transport to the plasma membrane depends on interaction with E1 protein. The surface glycoproteins display an irregular helical organization and a pseudo-tetrameric inner nucleocapsid arrangement. Class II viral fusion protein. Fusion activity is inactive as long as E1 is bound to E2 in mature virion. After virus attachment to target cell and clathrin-mediated endocytosis, acidification of the endosome would induce dissociation of E1/E2 heterodimer and concomitant trimerization of the E1 subunits. This E1 homotrimer is fusion active, and promotes release of viral nucleocapsid in cytoplasm after endosome and viral membrane fusion. The cytoplasmic tail of spike glycoprotein E1 modulates virus release. The surface glycoproteins display an irregular helical organization and a pseudo-tetrameric inner nucleocapsid arrangement. In Rubella virus (strain Therien) (RUBV), this protein is Structural polyprotein.